The sequence spans 407 residues: Phenazine 1,6-dicarboxylic acid hydroxylase PhzS (407 aa).

Residues G17, V134, and D313 each contribute to the FAD site.

It depends on FAD as a cofactor.

It catalyses the reaction phenazine-1,6-dicarboxylate + NADH + O2 + 2 H(+) = 6-hydroxyphenazine-1-carboxylate + CO2 + NAD(+) + H2O. It carries out the reaction 6-hydroxyphenazine-1-carboxylate + NADH + O2 + 2 H(+) = 1,6-dihydroxyphenazine + CO2 + NAD(+) + H2O. The enzyme catalyses phenazine-1-carboxylate + NADH + O2 + 2 H(+) = 1-hydroxyphenazine + CO2 + NAD(+) + H2O. Functionally, involved in the biosynthesis of phenazine natural products including myxin, an N(5),N(10)-dioxide phenazine antiobiotic, which has antimicrobial activity. Catalyzes the decarboxylative hydroxylations of phenazine 1,6-dicarboxylic acid (PDC) to produce 1,6-dihydroxyphenazine (DHP). Low activity with phenazine 1-carboxylic acid (PCA) to produce 1-hydroxyphenazine. This chain is Phenazine 1,6-dicarboxylic acid hydroxylase PhzS, found in Lysobacter antibioticus.